The chain runs to 301 residues: MECAVDAQSLISISLRKIHNSRTQRGGIKLHKNLLVSYVLRNARQVYMNEKYAEIYRMQQYEEVMTVCNEIQELNPLDLAEDCEDQTADCCGSASESASLCGALLPAVGHQTSPAAQHIQPASACSVPLALQSEEVCKAAPEPSFYRSCCAEAYPVSNCDFSPVNNMHCNKTTVLDLDTHVVTTVENGYLHQDCCASLQQCCQGAQSPAKKRKLDFGYYVSEIEEAPDFTPCKRAKFEDSSYAITEPLDTSNISNLISIFGSGFSGLVSRQADLEQALNGQFCSKQALASLGAWTRAIVAF.

Belongs to the IER family.

This chain is Immediate early response gene 5-like protein (ier5l), found in Danio rerio (Zebrafish).